Here is a 465-residue protein sequence, read N- to C-terminus: Probable inactive receptor-like kinase BSK12 (465 aa).

Over residues 1–12 the composition is skewed to polar residues; that stretch reads MGCCYSLSSTVD. The interval 1–34 is disordered; that stretch reads MGCCYSLSSTVDPVQDHTTDASSEPRNGGGEDPP. A lipid anchor (N-myristoyl glycine) is attached at glycine 2. Residues cysteine 3 and cysteine 4 are each lipidated (S-palmitoyl cysteine). In terms of domain architecture, Protein kinase spans 50–291; the sequence is FSPENIVSDQ…KEIVATLETL (242 aa). Residues 56–64 and lysine 78 contribute to the ATP site; that span reads VSDQTSDVV.

Belongs to the protein kinase superfamily. Ser/Thr protein kinase family. Interacts with YDA. Diacylation-mediated membrane association is essential for BSK12 function. As to expression, expressed at the mRNA level in the sperm cells in mature pollen, but the protein is only detectable in the zygote and the micropylar endosperm upon fertilization.

It localises to the cell membrane. Functionally, probable inactive protein kinase that activates the YODA MAP kinase cascade, which regulates the asymmetric first division and embryo polarity, by promoting the elongation of the zygote and the development of its basal daughter cell into the extra-embryonic suspensor. Acts as an adapter at the plasma membrane, possibly by recruiting and binding an activator. In Arabidopsis thaliana (Mouse-ear cress), this protein is Probable inactive receptor-like kinase BSK12.